We begin with the raw amino-acid sequence, 369 residues long: Transmembrane protein 198 (369 aa).

The next 7 membrane-spanning stretches (helical) occupy residues 37 to 57, 60 to 80, 93 to 113, 117 to 137, 148 to 168, 181 to 201, and 216 to 236; these read VVPSVVCSMCCLFGIIYCFFG, CFKAVLFLTGLMFGSVIIFLL, VEASVGIGLGIGTLCGLVTML, VGLFMVGLLLGLLVGIGTLIG, SVWVPLGVLLGLGMLFAVLTL, VFGAAVIVVATDYFVELFALV, and VCWTTWVVLGAWPALALLGVL. Residues 266–308 form a disordered region; sequence RQKEERRESSRKKKRKQPQSAQHTHAAKALHPEPAYRRKPNPI.

Belongs to the TMEM198 family.

The protein resides in the membrane. The polypeptide is Transmembrane protein 198 (tmem198ab) (Danio rerio (Zebrafish)).